Here is a 168-residue protein sequence, read N- to C-terminus: Probable chemoreceptor glutamine deamidase CheD (168 aa).

Belongs to the CheD family.

It catalyses the reaction L-glutaminyl-[protein] + H2O = L-glutamyl-[protein] + NH4(+). Its function is as follows. Probably deamidates glutamine residues to glutamate on methyl-accepting chemotaxis receptors (MCPs), playing an important role in chemotaxis. The protein is Probable chemoreceptor glutamine deamidase CheD of Pseudomonas syringae pv. tomato (strain ATCC BAA-871 / DC3000).